Reading from the N-terminus, the 432-residue chain is Serine--tRNA ligase (432 aa).

237–239 (TSE) is a binding site for L-serine. 268 to 270 (RSE) contacts ATP. Glutamate 291 provides a ligand contact to L-serine. 355 to 358 (EISS) is an ATP binding site. Serine 390 is a binding site for L-serine.

The protein belongs to the class-II aminoacyl-tRNA synthetase family. Type-1 seryl-tRNA synthetase subfamily. In terms of assembly, homodimer. The tRNA molecule binds across the dimer.

The protein localises to the cytoplasm. It catalyses the reaction tRNA(Ser) + L-serine + ATP = L-seryl-tRNA(Ser) + AMP + diphosphate + H(+). The catalysed reaction is tRNA(Sec) + L-serine + ATP = L-seryl-tRNA(Sec) + AMP + diphosphate + H(+). It functions in the pathway aminoacyl-tRNA biosynthesis; selenocysteinyl-tRNA(Sec) biosynthesis; L-seryl-tRNA(Sec) from L-serine and tRNA(Sec): step 1/1. In terms of biological role, catalyzes the attachment of serine to tRNA(Ser). Is also able to aminoacylate tRNA(Sec) with serine, to form the misacylated tRNA L-seryl-tRNA(Sec), which will be further converted into selenocysteinyl-tRNA(Sec). The chain is Serine--tRNA ligase from Methylobacillus flagellatus (strain ATCC 51484 / DSM 6875 / VKM B-1610 / KT).